The primary structure comprises 449 residues: Probable cysteine proteinase 224L (449 aa).

Catalysis depends on residues Cys-99, His-292, and Asn-322. Residues Asp-429 to Leu-449 traverse the membrane as a helical segment.

This sequence belongs to the peptidase C1 family.

It localises to the membrane. In terms of biological role, probable cysteine protease. The protein is Probable cysteine proteinase 224L of Acheta domesticus (House cricket).